We begin with the raw amino-acid sequence, 171 residues long: Regulator of ribonuclease activity A (171 aa).

This sequence belongs to the RraA family. In terms of assembly, homotrimer. Binds to both RNA-binding sites in the C-terminal region of Rne and to RhlB.

The protein resides in the cytoplasm. Its function is as follows. Globally modulates RNA abundance by binding to RNase E (Rne) and regulating its endonucleolytic activity. Can modulate Rne action in a substrate-dependent manner by altering the composition of the degradosome. Modulates RNA-binding and helicase activities of the degradosome. In Vibrio cholerae serotype O1 (strain ATCC 39315 / El Tor Inaba N16961), this protein is Regulator of ribonuclease activity A.